Reading from the N-terminus, the 330-residue chain is Ketol-acid reductoisomerase (NADP(+)) (330 aa).

The 181-residue stretch at 1-181 (MNVYYEQDAD…GGTKAGVIET (181 aa)) folds into the KARI N-terminal Rossmann domain. Residues 24-27 (YGSQ), Arg47, Ser50, Ser52, and 82-85 (DQTQ) each bind NADP(+). The active site involves His107. Gly133 contacts NADP(+). A KARI C-terminal knotted domain is found at 182-327 (NFKDETETDL…AKLRNMMSWL (146 aa)). Mg(2+) is bound by residues Asp190, Glu194, Glu226, and Glu230. Residue Ser251 coordinates substrate.

It belongs to the ketol-acid reductoisomerase family. Mg(2+) is required as a cofactor.

It carries out the reaction (2R)-2,3-dihydroxy-3-methylbutanoate + NADP(+) = (2S)-2-acetolactate + NADPH + H(+). The catalysed reaction is (2R,3R)-2,3-dihydroxy-3-methylpentanoate + NADP(+) = (S)-2-ethyl-2-hydroxy-3-oxobutanoate + NADPH + H(+). It participates in amino-acid biosynthesis; L-isoleucine biosynthesis; L-isoleucine from 2-oxobutanoate: step 2/4. The protein operates within amino-acid biosynthesis; L-valine biosynthesis; L-valine from pyruvate: step 2/4. Its function is as follows. Involved in the biosynthesis of branched-chain amino acids (BCAA). Catalyzes an alkyl-migration followed by a ketol-acid reduction of (S)-2-acetolactate (S2AL) to yield (R)-2,3-dihydroxy-isovalerate. In the isomerase reaction, S2AL is rearranged via a Mg-dependent methyl migration to produce 3-hydroxy-3-methyl-2-ketobutyrate (HMKB). In the reductase reaction, this 2-ketoacid undergoes a metal-dependent reduction by NADPH to yield (R)-2,3-dihydroxy-isovalerate. This is Ketol-acid reductoisomerase (NADP(+)) from Chlorobium luteolum (strain DSM 273 / BCRC 81028 / 2530) (Pelodictyon luteolum).